A 248-amino-acid polypeptide reads, in one-letter code: Probable phosphatase VS_II0429 (248 aa).

Residues His8, His10, His16, His41, Glu74, His102, His132, Asp194, and His196 each contribute to the Zn(2+) site.

It belongs to the PHP family. The cofactor is Zn(2+).

This chain is Probable phosphatase VS_II0429, found in Vibrio atlanticus (strain LGP32) (Vibrio splendidus (strain Mel32)).